Here is a 515-residue protein sequence, read N- to C-terminus: Aldehyde dehydrogenase (515 aa).

The span at 1–12 shows a compositional bias: polar residues; the sequence is MTVAEQQPQHQG. Positions 1–20 are disordered; it reads MTVAEQQPQHQGYANPGTPG. 228-234 provides a ligand contact to NAD(+); sequence GFGLEAG. Residues glutamate 272 and cysteine 311 contribute to the active site.

It belongs to the aldehyde dehydrogenase family.

It catalyses the reaction an aldehyde + NAD(+) + H2O = a carboxylate + NADH + 2 H(+). This is Aldehyde dehydrogenase (aldA) from Deinococcus radiodurans (strain ATCC 13939 / DSM 20539 / JCM 16871 / CCUG 27074 / LMG 4051 / NBRC 15346 / NCIMB 9279 / VKM B-1422 / R1).